Here is a 325-residue protein sequence, read N- to C-terminus: Pyruvate dehydrogenase E1 component subunit beta (325 aa).

Glu60 provides a ligand contact to thiamine diphosphate.

Heterodimer of an alpha and a beta chain. Thiamine diphosphate is required as a cofactor.

It catalyses the reaction N(6)-[(R)-lipoyl]-L-lysyl-[protein] + pyruvate + H(+) = N(6)-[(R)-S(8)-acetyldihydrolipoyl]-L-lysyl-[protein] + CO2. Its function is as follows. The pyruvate dehydrogenase complex catalyzes the overall conversion of pyruvate to acetyl-CoA and CO(2). It contains multiple copies of three enzymatic components: pyruvate dehydrogenase (E1), dihydrolipoamide acetyltransferase (E2) and lipoamide dehydrogenase (E3). In Geobacillus stearothermophilus (Bacillus stearothermophilus), this protein is Pyruvate dehydrogenase E1 component subunit beta (pdhB).